Reading from the N-terminus, the 385-residue chain is S-adenosylmethionine synthase (385 aa).

Histidine 15 contacts ATP. Residue aspartate 17 coordinates Mg(2+). Glutamate 43 contributes to the K(+) binding site. The L-methionine site is built by glutamate 56 and glutamine 99. The segment at 99–109 (QSPEIAQGVDE) is flexible loop. Residues 164-166 (DAK), 230-231 (RF), aspartate 239, 245-246 (RK), alanine 262, and lysine 266 each bind ATP. Residue aspartate 239 participates in L-methionine binding. Lysine 270 is a binding site for L-methionine.

This sequence belongs to the AdoMet synthase family. As to quaternary structure, homotetramer; dimer of dimers. Mg(2+) serves as cofactor. It depends on K(+) as a cofactor.

It is found in the cytoplasm. It carries out the reaction L-methionine + ATP + H2O = S-adenosyl-L-methionine + phosphate + diphosphate. It functions in the pathway amino-acid biosynthesis; S-adenosyl-L-methionine biosynthesis; S-adenosyl-L-methionine from L-methionine: step 1/1. Its function is as follows. Catalyzes the formation of S-adenosylmethionine (AdoMet) from methionine and ATP. The overall synthetic reaction is composed of two sequential steps, AdoMet formation and the subsequent tripolyphosphate hydrolysis which occurs prior to release of AdoMet from the enzyme. This chain is S-adenosylmethionine synthase, found in Hydrogenovibrio crunogenus (strain DSM 25203 / XCL-2) (Thiomicrospira crunogena).